Consider the following 351-residue polypeptide: Histidinol-phosphate aminotransferase (351 aa).

Residue K213 is modified to N6-(pyridoxal phosphate)lysine.

Belongs to the class-II pyridoxal-phosphate-dependent aminotransferase family. Histidinol-phosphate aminotransferase subfamily. As to quaternary structure, homodimer. It depends on pyridoxal 5'-phosphate as a cofactor.

The enzyme catalyses L-histidinol phosphate + 2-oxoglutarate = 3-(imidazol-4-yl)-2-oxopropyl phosphate + L-glutamate. The protein operates within amino-acid biosynthesis; L-histidine biosynthesis; L-histidine from 5-phospho-alpha-D-ribose 1-diphosphate: step 7/9. This is Histidinol-phosphate aminotransferase from Thermoanaerobacter pseudethanolicus (strain ATCC 33223 / 39E) (Clostridium thermohydrosulfuricum).